Here is a 435-residue protein sequence, read N- to C-terminus: Eukaryotic peptide chain release factor subunit 1-2 (435 aa).

N-acetylalanine is present on Ala-2.

It belongs to the eukaryotic release factor 1 family. In terms of assembly, heterodimer of two subunits, one of which binds GTP. Interacts with OR.

The protein resides in the cytoplasm. Directs the termination of nascent peptide synthesis (translation) in response to the termination codons UAA, UAG and UGA. Modulates plant growth and development. This is Eukaryotic peptide chain release factor subunit 1-2 from Brassica oleracea var. botrytis (Cauliflower).